Consider the following 633-residue polypeptide: Chaperone protein DnaK (633 aa).

Phosphothreonine; by autocatalysis is present on Thr198.

The protein belongs to the heat shock protein 70 family.

Its function is as follows. Acts as a chaperone. This is Chaperone protein DnaK from Rhodopseudomonas palustris (strain HaA2).